The sequence spans 645 residues: UvrABC system protein C (645 aa).

The GIY-YIG domain maps to 12 to 91; sequence TGPGVYLYKN…IKQRKPRFNV (80 aa). One can recognise a UVR domain in the interval 202–237; that stretch reads ADLERSLEVRMQEAAAAEQFELAAKYRDLLVTLHQL.

The protein belongs to the UvrC family. Interacts with UvrB in an incision complex.

The protein localises to the cytoplasm. Functionally, the UvrABC repair system catalyzes the recognition and processing of DNA lesions. UvrC both incises the 5' and 3' sides of the lesion. The N-terminal half is responsible for the 3' incision and the C-terminal half is responsible for the 5' incision. In Acidobacterium capsulatum (strain ATCC 51196 / DSM 11244 / BCRC 80197 / JCM 7670 / NBRC 15755 / NCIMB 13165 / 161), this protein is UvrABC system protein C.